The following is a 318-amino-acid chain: MVGYDAKADVRSNSKLEVAVAGSVSGFVTRALISPLDVIKIRFQLQIERLCPSDPNAKYHGIFQAAKQILQEEGPRAFWKGHVPAQILSIGYGAVQFLAFEELTELLYQANLYQTHQFSAHFVCGGLSAGTATLTVHPVDVLRTRLAAQGEPKIYNNLREAIRTMYKTEGPFVFYKGLTPTVIAIFPYAGLQFSCYRSLKRAYDWLIPPDGKQTGNLKNLLCGCGSGVISKTFTYPLDLIKKRLQVGGFEHARSAFGQVRSYRGLLDLTQQVLQEEGTRGFFKGLSPSLMKAALSTGFMFFWYELFCNLFHCIRREDR.

3 Solcar repeats span residues 13-106, 116-202, and 214-309; these read NSKL…LTEL, HQFS…LKRA, and TGNL…FCNL. Helical transmembrane passes span 19–39, 87–107, 122–142, 173–193, and 220–240; these read AVAG…LDVI, ILSI…TELL, FVCG…VDVL, VFYK…GLQF, and LLCG…LDLI. Residues 241–246 carry the Substrate recognition motif; it reads KKRLQV. A helical membrane pass occupies residues 293-313; sequence ALSTGFMFFWYELFCNLFHCI.

Belongs to the mitochondrial carrier (TC 2.A.29) family.

Its subcellular location is the mitochondrion membrane. It catalyses the reaction thiamine phosphate(out) + thiamine diphosphate(in) = thiamine phosphate(in) + thiamine diphosphate(out). Its function is as follows. Mitochondrial transporter mediating uptake of thiamine diphosphate into mitochondria. It is not clear if the antiporter activity is affected by the membrane potential or by the proton electrochemical gradient. The sequence is that of Mitochondrial thiamine pyrophosphate carrier (Slc25a19) from Mus musculus (Mouse).